A 160-amino-acid polypeptide reads, in one-letter code: Putative 4-hydroxy-4-methyl-2-oxoglutarate aldolase (160 aa).

Residues 76 to 79 (GGNL) and R98 contribute to the substrate site. A divalent metal cation is bound at residue D99.

Belongs to the class II aldolase/RraA-like family. In terms of assembly, homotrimer. It depends on a divalent metal cation as a cofactor.

It catalyses the reaction 4-hydroxy-4-methyl-2-oxoglutarate = 2 pyruvate. It carries out the reaction oxaloacetate + H(+) = pyruvate + CO2. Catalyzes the aldol cleavage of 4-hydroxy-4-methyl-2-oxoglutarate (HMG) into 2 molecules of pyruvate. Also contains a secondary oxaloacetate (OAA) decarboxylase activity due to the common pyruvate enolate transition state formed following C-C bond cleavage in the retro-aldol and decarboxylation reactions. This Deinococcus radiodurans (strain ATCC 13939 / DSM 20539 / JCM 16871 / CCUG 27074 / LMG 4051 / NBRC 15346 / NCIMB 9279 / VKM B-1422 / R1) protein is Putative 4-hydroxy-4-methyl-2-oxoglutarate aldolase.